A 162-amino-acid polypeptide reads, in one-letter code: Protein-export protein SecB (162 aa).

It belongs to the SecB family. In terms of assembly, homotetramer, a dimer of dimers. One homotetramer interacts with 1 SecA dimer.

Its subcellular location is the cytoplasm. Its function is as follows. One of the proteins required for the normal export of preproteins out of the cell cytoplasm. It is a molecular chaperone that binds to a subset of precursor proteins, maintaining them in a translocation-competent state. It also specifically binds to its receptor SecA. The polypeptide is Protein-export protein SecB (Bradyrhizobium sp. (strain BTAi1 / ATCC BAA-1182)).